The chain runs to 453 residues: Argininosuccinate lyase (453 aa).

Belongs to the lyase 1 family. Argininosuccinate lyase subfamily.

It is found in the cytoplasm. The catalysed reaction is 2-(N(omega)-L-arginino)succinate = fumarate + L-arginine. Its pathway is amino-acid biosynthesis; L-arginine biosynthesis; L-arginine from L-ornithine and carbamoyl phosphate: step 3/3. The sequence is that of Argininosuccinate lyase from Shewanella loihica (strain ATCC BAA-1088 / PV-4).